We begin with the raw amino-acid sequence, 142 residues long: Metallothiol transferase FosB (142 aa).

A VOC domain is found at 5 to 120 (NVNHICFSVS…DGHKIELHTG (116 aa)). Mg(2+)-binding residues include H8, H67, and E116. E116 (proton donor/acceptor) is an active-site residue.

It belongs to the fosfomycin resistance protein family. FosB subfamily. In terms of assembly, homodimer. Mg(2+) serves as cofactor.

The protein resides in the cytoplasm. Functionally, metallothiol transferase which confers resistance to fosfomycin by catalyzing the addition of a thiol cofactor to fosfomycin. L-cysteine is probably the physiological thiol donor. This Staphylococcus epidermidis (strain ATCC 35984 / DSM 28319 / BCRC 17069 / CCUG 31568 / BM 3577 / RP62A) protein is Metallothiol transferase FosB.